The following is a 242-amino-acid chain: Prosalusin (242 aa).

An N-terminal signal peptide occupies residues 1–26; that stretch reads MAAATRSCRPWGSLLGLIWLVSAAAA. Residues 27 to 189 constitute a propeptide that is removed on maturation; it reads SWDLSSLRCN…SSWVVYGTNY (163 aa). 93–100 contacts ATP; the sequence is GWTGTGKS. The N-linked (GlcNAc...) asparagine glycan is linked to asparagine 149.

The protein belongs to the ClpA/ClpB family. Torsin subfamily.

The protein localises to the secreted. In terms of biological role, salusin may be a endocrine and/or paracrine factor able to increase intracellular calcium concentrations and induce cell mitogenesis. Salusin may also be a potent hypotensive peptide. The chain is Prosalusin (TOR2A) from Bos taurus (Bovine).